We begin with the raw amino-acid sequence, 142 residues long: Deoxyuridine 5'-triphosphate nucleotidohydrolase (142 aa).

Substrate-binding positions include 62–64, asparagine 75, and 79–81; these read RSG and TID.

Belongs to the dUTPase family. It depends on Mg(2+) as a cofactor.

The catalysed reaction is dUTP + H2O = dUMP + diphosphate + H(+). It functions in the pathway pyrimidine metabolism; dUMP biosynthesis; dUMP from dCTP (dUTP route): step 2/2. Its function is as follows. This enzyme is involved in nucleotide metabolism: it produces dUMP, the immediate precursor of thymidine nucleotides and it decreases the intracellular concentration of dUTP so that uracil cannot be incorporated into DNA. This is Deoxyuridine 5'-triphosphate nucleotidohydrolase from Trichodesmium erythraeum (strain IMS101).